Here is a 703-residue protein sequence, read N- to C-terminus: Elongation factor G 1 (703 aa).

A tr-type G domain is found at 8-290 (ERYRNIGISA…AVIDFLPSPV (283 aa)). Residues 17 to 24 (AHIDAGKT), 88 to 92 (DTPGH), and 142 to 145 (NKMD) each bind GTP.

The protein belongs to the TRAFAC class translation factor GTPase superfamily. Classic translation factor GTPase family. EF-G/EF-2 subfamily.

It is found in the cytoplasm. Catalyzes the GTP-dependent ribosomal translocation step during translation elongation. During this step, the ribosome changes from the pre-translocational (PRE) to the post-translocational (POST) state as the newly formed A-site-bound peptidyl-tRNA and P-site-bound deacylated tRNA move to the P and E sites, respectively. Catalyzes the coordinated movement of the two tRNA molecules, the mRNA and conformational changes in the ribosome. The polypeptide is Elongation factor G 1 (Ralstonia nicotianae (strain ATCC BAA-1114 / GMI1000) (Ralstonia solanacearum)).